The chain runs to 204 residues: Glycerol-3-phosphate acyltransferase (204 aa).

The next 5 helical transmembrane spans lie at M8–F28, V53–A73, F81–G101, F116–I136, and V155–L175.

This sequence belongs to the PlsY family. In terms of assembly, probably interacts with PlsX.

It is found in the cell inner membrane. It catalyses the reaction an acyl phosphate + sn-glycerol 3-phosphate = a 1-acyl-sn-glycero-3-phosphate + phosphate. Its pathway is lipid metabolism; phospholipid metabolism. In terms of biological role, catalyzes the transfer of an acyl group from acyl-phosphate (acyl-PO(4)) to glycerol-3-phosphate (G3P) to form lysophosphatidic acid (LPA). This enzyme utilizes acyl-phosphate as fatty acyl donor, but not acyl-CoA or acyl-ACP. This Francisella philomiragia subsp. philomiragia (strain ATCC 25017 / CCUG 19701 / FSC 153 / O#319-036) protein is Glycerol-3-phosphate acyltransferase.